Here is an 860-residue protein sequence, read N- to C-terminus: DNA mismatch repair protein MutS (860 aa).

618-625 (GPNMGGKS) contributes to the ATP binding site.

It belongs to the DNA mismatch repair MutS family.

Functionally, this protein is involved in the repair of mismatches in DNA. It is possible that it carries out the mismatch recognition step. This protein has a weak ATPase activity. The protein is DNA mismatch repair protein MutS of Hahella chejuensis (strain KCTC 2396).